The chain runs to 326 residues: RNA-binding motif protein, X-linked 2 (326 aa).

Lysine 8 participates in a covalent cross-link: Glycyl lysine isopeptide (Lys-Gly) (interchain with G-Cter in SUMO2). In terms of domain architecture, RRM spans alanine 36 to asparagine 114. The tract at residues alanine 117–histidine 326 is disordered. At threonine 140 the chain carries Phosphothreonine. Residue serine 149 is modified to Phosphoserine. A compositionally biased stretch (basic residues) spans threonine 157–lysine 172. Residues glycine 177–alanine 190 are compositionally biased toward polar residues. 4 stretches are compositionally biased toward basic and acidic residues: residues threonine 191 to alanine 200, lysine 207 to glutamate 219, alanine 236 to alanine 245, and lysine 255 to arginine 273. At serine 274 the chain carries Phosphoserine. Residues histidine 291 to serine 312 are compositionally biased toward basic residues. The span at arginine 313–histidine 326 shows a compositional bias: basic and acidic residues.

This sequence belongs to the IST3 family. As to quaternary structure, part of the activated spliceosome B/catalytic step 1 spliceosome, one of the forms of the spliceosome which has a well-formed active site but still cannot catalyze the branching reaction and is composed of at least 52 proteins, the U2, U5 and U6 snRNAs and the pre-mRNA. Component of the minor spliceosome, which splices U12-type introns.

The protein resides in the nucleus. Involved in pre-mRNA splicing as component of the activated spliceosome. As a component of the minor spliceosome, involved in the splicing of U12-type introns in pre-mRNAs. This is RNA-binding motif protein, X-linked 2 (Rbmx2) from Mus musculus (Mouse).